Consider the following 216-residue polypeptide: Gas vesicle protein H (216 aa).

The interval 1–141 is disordered; the sequence is MSPNLNGPGG…IHIETRETDD (141 aa). The segment covering 15 to 25 has biased composition (acidic residues); sequence DRPDEPDDSDR. Basic and acidic residues-rich tracts occupy residues 38–51, 73–84, and 107–141; these read PDDR…RPSD, DGHRQGHGRIDR, and KPSD…ETDD.

It belongs to the gas vesicle GvpH family. GvpF to GvpM interact with each other in vitro, and may form multi-subunit complex(es). Interacts with GvpC. Might interact with GvpA.

It is found in the gas vesicle. Proteins GvpF to GvpM might be involved in nucleating gas vesicle formation. A minor component of the gas vesicle. Gas vesicles are hollow, gas filled proteinaceous nanostructures found in some microorganisms. They allow positioning of halobacteria at the optimal depth for growth in the poorly aerated, shallow brine pools of their habitat. Functionally, expression of a 9.5 kb mc-vac DNA fragment containing 2 divergently transcribed regions (gvpD-gvpE-gvpF-gvpG-gvpH-gvpI-gvpJ-gvpK-gvpL-gvpM and gvpA-gvpC-gvpN-gvpO) allows H.volcanii to produce gas vesicles. The polypeptide is Gas vesicle protein H (Haloferax mediterranei (strain ATCC 33500 / DSM 1411 / JCM 8866 / NBRC 14739 / NCIMB 2177 / R-4) (Halobacterium mediterranei)).